The sequence spans 50 residues: Sperm protamine P1 (50 aa).

This sequence belongs to the protamine P1 family. Testis.

It is found in the nucleus. Its subcellular location is the chromosome. Functionally, protamines substitute for histones in the chromatin of sperm during the haploid phase of spermatogenesis. They compact sperm DNA into a highly condensed, stable and inactive complex. This chain is Sperm protamine P1 (PRM1), found in Chilonatalus micropus (Cuban funnel-eared bat).